Consider the following 349-residue polypeptide: Ribosomal RNA small subunit methyltransferase H 1 (349 aa).

S-adenosyl-L-methionine is bound by residues 79 to 81 (GGH), aspartate 99, phenylalanine 129, aspartate 148, and glutamine 155.

The protein belongs to the methyltransferase superfamily. RsmH family.

Its subcellular location is the cytoplasm. It carries out the reaction cytidine(1402) in 16S rRNA + S-adenosyl-L-methionine = N(4)-methylcytidine(1402) in 16S rRNA + S-adenosyl-L-homocysteine + H(+). In terms of biological role, specifically methylates the N4 position of cytidine in position 1402 (C1402) of 16S rRNA. The polypeptide is Ribosomal RNA small subunit methyltransferase H 1 (Agathobacter rectalis (strain ATCC 33656 / DSM 3377 / JCM 17463 / KCTC 5835 / VPI 0990) (Eubacterium rectale)).